We begin with the raw amino-acid sequence, 65 residues long: Large ribosomal subunit protein bL33c (65 aa).

This sequence belongs to the bacterial ribosomal protein bL33 family.

Its subcellular location is the plastid. It localises to the chloroplast. The chain is Large ribosomal subunit protein bL33c (rpl33) from Marchantia polymorpha (Common liverwort).